Reading from the N-terminus, the 853-residue chain is Transforming growth factor beta receptor type 3 (853 aa).

The signal sequence occupies residues 1-23; sequence MAVTSHHMIPVMVVLMSACLATA. Residues 24 to 789 are Extracellular-facing; that stretch reads GPEPSTRCEL…IFHGLDTLTV (766 aa). N-linked (GlcNAc...) asparagine glycosylation is found at Asn37, Asn144, and Asn493. Cys55 and Cys200 are oxidised to a cystine. The 275-residue stretch at 456–730 folds into the ZP domain; it reads KCDHEKMVVA…PRCVTPDDAC (275 aa). Residues 530–559 form a disordered region; the sequence is SPGDSSGWPDGYEDLESGDNGFPGDGDEGE. Ser535 and Ser546 each carry an O-linked (Xyl...) (glycosaminoglycan) serine glycan. Asn572, Asn591, and Asn698 each carry an N-linked (GlcNAc...) asparagine glycan. 3 disulfides stabilise this stretch: Cys640–Cys706, Cys661–Cys730, and Cys711–Cys723. The interaction with TGF-beta ligand stretch occupies residues 737–751; that stretch reads MIWTMMQNKKTFTKP. Residues 790 to 811 form a helical membrane-spanning segment; sequence MGIAFAAFVIGALLTGALWYIY. The Cytoplasmic portion of the chain corresponds to 812 to 853; sequence SHTGETARRQQVPTSPPASENSSAAHSIGSTQSTPCSSSSTA. Polar residues predominate over residues 820-836; the sequence is RQQVPTSPPASENSSAA. The disordered stretch occupies residues 820–853; sequence RQQVPTSPPASENSSAAHSIGSTQSTPCSSSSTA. Positions 838–853 are enriched in low complexity; sequence SIGSTQSTPCSSSSTA. Thr842 is modified (phosphothreonine).

In terms of assembly, forms homodimers and homooligomers. Interacts with DYNLT4. Interacts with integrin ITGA5:ITGB1; this interaction promotes the internalization and trafficking of ITGA5:ITGB1 into endocytic vesicles. Interacts with TGFB1, BMP2, BMP5, BMP7 or GDF5 and inhibin A via the ligand binding domains. Interacts with ALK3/BMPR1A; this interaction results in the cell surface retention of BMPR1A. Interacts with ALK6/BMPR1B; this interaction enhances BMPR1B-mediated stimulation of the BMP signaling pathway. Interacts with the scaffolding protein beta-arrestin2/ARRB2; this interaction mediates internalization of TGFBR3 and thus regulates migration, actin cytoskeleton and activation of CDC42. In terms of processing, extensively modified by glycosaminoglycan groups (GAG). Phosphorylated in the cytoplasmic domain by the type II receptor TGFBR2 at THR-842 to mediate recruitment of ARRB2 and subsequent internalization of TGFBR2 and TGFBR3.

It is found in the cell membrane. Its subcellular location is the secreted. The protein localises to the extracellular space. The protein resides in the extracellular matrix. Functionally, cell surface receptor that regulates diverse cellular processes including cell proliferation, differentiation, migration, and apoptosis. Initiates BMP, inhibin, and TGF-beta signaling pathways by interacting with different ligands including TGFB1, BMP2, BMP5, BMP7 or GDF5. Alternatively, acts as a cell surface coreceptor for BMP ligands, serving to enhance ligand binding by differentially regulating BMPR1A/ALK3 and BMPR1B/ALK6 receptor trafficking. Promotes epithelial cell adhesion, focal adhesion formation and integrin signaling during epithelial cell spreading on fibronectin. By interacting with the scaffolding protein beta-arrestin2/ARRB2, regulates migration or actin cytoskeleton and promotes the activation of CDC42 as well as the inhibition of NF-kappa-B. In gonadotrope cells, acts as an inhibin A coreceptor and regulates follicle-stimulating hormone (FSH) levels and female fertility. Plays a role in the inhibition of directed and random cell migration in epithelial cells by altering the actin cytoskeletal organization. Participates in epithelial-mesenchymal transformation (EMT) upon binding to BMP2 or TGFB2, by activating the PAR6/SMURF1/RHOA pathway. This Rattus norvegicus (Rat) protein is Transforming growth factor beta receptor type 3 (Tgfbr3).